Reading from the N-terminus, the 161-residue chain is Nucleotide-binding protein Tbd_1846 (161 aa).

This sequence belongs to the YajQ family.

Functionally, nucleotide-binding protein. The protein is Nucleotide-binding protein Tbd_1846 of Thiobacillus denitrificans (strain ATCC 25259 / T1).